The primary structure comprises 462 residues: Calcitonin gene-related peptide type 1 receptor (462 aa).

Positions 1 to 22 are cleaved as a signal peptide; that stretch reads MEKKFFLSFLFLLPFFMILVIA. The Extracellular segment spans residues 23-140; the sequence is ESEEENPDDL…NTHEKVKTAL (118 aa). 3 disulfides stabilise this stretch: Cys-49/Cys-75, Cys-66/Cys-106, and Cys-89/Cys-128. Residues Asn-67, Asn-119, and Asn-124 are each glycosylated (N-linked (GlcNAc...) asparagine). A helical membrane pass occupies residues 141–165; that stretch reads NLFYLTIIGHVLSIASLLISLGIFF. Residues 166–176 are Cytoplasmic-facing; the sequence is YFKSLSCQRIT. The helical transmembrane segment at 177–199 threads the bilayer; sequence LHKNLFFSFVCNSVITIIHLTAV. Residues 200–210 lie on the Extracellular side of the membrane; it reads ANNQALVATNP. The chain crosses the membrane as a helical span at residues 211–239; that stretch reads VSCKVSQFIHLYLMGCNYFWMLCEGIYLH. The Cytoplasmic segment spans residues 240 to 253; it reads TLVVVAVFAEKQHL. The chain crosses the membrane as a helical span at residues 254-274; that stretch reads MWYYFLGWGFPLIPACIHAVA. The Extracellular portion of the chain corresponds to 275–290; the sequence is RRLYYNDNCWISSDTQ. The segment at 289 to 290 is required for RAMP3 interaction; that stretch reads TQ. The helical transmembrane segment at 291–315 threads the bilayer; it reads LLYIIHGPICAALLVNLFFLLNIVR. Residues 316–330 are Cytoplasmic-facing; sequence VLITKLKVTHQAESN. The helical transmembrane segment at 331–352 threads the bilayer; that stretch reads LYMKAVRATLILVPLLGIEFVL. The Extracellular portion of the chain corresponds to 353–367; the sequence is IPWRPEGKIAEEIYD. The helical transmembrane segment at 368–388 threads the bilayer; the sequence is YIINILMHYQGLLVSTIFCFF. Residues 389-462 are Cytoplasmic-facing; that stretch reads NGEVQAILRR…VVIKPEKLYD (74 aa). Residues Ser-421 and Ser-446 each carry the phosphoserine modification.

It belongs to the G-protein coupled receptor 2 family. Heterodimer of CALCRL and RAMP1; the receptor complex functions as CGRP receptor. Heterodimer of CALCRL and RAMP2 or CALCRL and RAMP3; the complexes function as adrenomedullin receptor.

It localises to the cell membrane. Its function is as follows. G protein-coupled receptor which specificity is determined by its interaction with receptor-activity-modifying proteins (RAMPs). Together with RAMP1, form the receptor complex for calcitonin-gene-related peptides CALCA/CGRP1 and CALCB/CGRP2. Together with RAMP2 or RAMP3, function as receptor complexes for adrenomedullin (ADM and ADM2). Ligand binding causes a conformation change that triggers signaling via guanine nucleotide-binding proteins (G proteins) and modulates the activity of downstream effectors. Activates cAMP-dependent pathway. This is Calcitonin gene-related peptide type 1 receptor (CALCRL) from Bos taurus (Bovine).